The chain runs to 130 residues: UPF0102 protein Cthe_0758 (130 aa).

The protein belongs to the UPF0102 family.

This Acetivibrio thermocellus (strain ATCC 27405 / DSM 1237 / JCM 9322 / NBRC 103400 / NCIMB 10682 / NRRL B-4536 / VPI 7372) (Clostridium thermocellum) protein is UPF0102 protein Cthe_0758.